The sequence spans 215 residues: Methylthioribulose-1-phosphate dehydratase (215 aa).

Zn(2+) contacts are provided by His-103 and His-105.

It belongs to the aldolase class II family. MtnB subfamily. The cofactor is Zn(2+).

It carries out the reaction 5-(methylsulfanyl)-D-ribulose 1-phosphate = 5-methylsulfanyl-2,3-dioxopentyl phosphate + H2O. The protein operates within amino-acid biosynthesis; L-methionine biosynthesis via salvage pathway; L-methionine from S-methyl-5-thio-alpha-D-ribose 1-phosphate: step 2/6. Its function is as follows. Catalyzes the dehydration of methylthioribulose-1-phosphate (MTRu-1-P) into 2,3-diketo-5-methylthiopentyl-1-phosphate (DK-MTP-1-P). The sequence is that of Methylthioribulose-1-phosphate dehydratase from Persephonella marina (strain DSM 14350 / EX-H1).